We begin with the raw amino-acid sequence, 535 residues long: Beta-hexosaminidase 3 (535 aa).

A signal peptide spans 1-24 (MRGSGAKIAGVLPLFMLFIAGTIS). N92 carries an N-linked (GlcNAc...) asparagine glycan. A disulfide bridge links C292 with C334. E329 acts as the Proton donor in catalysis. N331, N405, N441, and N496 each carry an N-linked (GlcNAc...) asparagine glycan. A disulfide bridge links C506 with C532.

This sequence belongs to the glycosyl hydrolase 20 family. Post-translationally, N-glycosylated. Expressed in roots, leaves, stems, flowers and siliques.

It is found in the cell membrane. The catalysed reaction is Hydrolysis of terminal non-reducing N-acetyl-D-hexosamine residues in N-acetyl-beta-D-hexosaminides.. Slightly inhibited by N-acetylcastanospermine. Has a broad substrate specificity. Can use synthetic substrates such as pyridylaminated chitotriose, p-nitrophenyl-beta-N-acetylglucosaminide, p-nitrophenyl-2-acetamido-2-deoxy-beta-D-glucopyranoside (pNP-GlcNAc), p-nitrophenyl-2-acetamido-2-deoxy-beta-D-galactopyranoside (pNP-GalNAc), 4-methylumbelliferyl-2-acetamido-2-deoxy-beta-D-glucopyranoside (MU-GlcNAc), and 4-methylumbelliferyl-6-sulfo-2-acetamido-2-deoxy-beta-D-glucopyranoside (MU-GlcNAc-6SO(4)) as substrates. Removes terminal GlcNAc residues from alpha1,3- and alpha1,6-mannosyl branches of biantennary N-glycans without any strict branch preference. Required for the presence of paucimannosidic N-glycans in glycoproteins of roots and leaves. The chain is Beta-hexosaminidase 3 (HEXO3) from Arabidopsis thaliana (Mouse-ear cress).